A 208-amino-acid chain; its full sequence is N-(5'-phosphoribosyl)anthranilate isomerase (208 aa).

This sequence belongs to the TrpF family.

It carries out the reaction N-(5-phospho-beta-D-ribosyl)anthranilate = 1-(2-carboxyphenylamino)-1-deoxy-D-ribulose 5-phosphate. It participates in amino-acid biosynthesis; L-tryptophan biosynthesis; L-tryptophan from chorismate: step 3/5. This Methanococcus maripaludis (strain C5 / ATCC BAA-1333) protein is N-(5'-phosphoribosyl)anthranilate isomerase.